A 107-amino-acid chain; its full sequence is Nucleoid-associated protein RC1337 (107 aa).

Belongs to the YbaB/EbfC family. In terms of assembly, homodimer.

Its subcellular location is the cytoplasm. It is found in the nucleoid. Functionally, binds to DNA and alters its conformation. May be involved in regulation of gene expression, nucleoid organization and DNA protection. In Rickettsia conorii (strain ATCC VR-613 / Malish 7), this protein is Nucleoid-associated protein RC1337.